The chain runs to 298 residues: Ethanolamine ammonia-lyase small subunit (298 aa).

Val-210, Glu-231, and Cys-261 together coordinate adenosylcob(III)alamin.

It belongs to the EutC family. In terms of assembly, the basic unit is a heterodimer which dimerizes to form tetramers. The heterotetramers trimerize; 6 large subunits form a core ring with 6 small subunits projecting outwards. The cofactor is adenosylcob(III)alamin.

It is found in the bacterial microcompartment. The catalysed reaction is ethanolamine = acetaldehyde + NH4(+). It functions in the pathway amine and polyamine degradation; ethanolamine degradation. Functionally, catalyzes the deamination of various vicinal amino-alcohols to oxo compounds. Allows this organism to utilize ethanolamine as the sole source of nitrogen and carbon in the presence of external vitamin B12. The protein is Ethanolamine ammonia-lyase small subunit of Salmonella agona (strain SL483).